Consider the following 349-residue polypeptide: Heparin sulfate O-sulfotransferase (349 aa).

Topologically, residues 1 to 17 are cytoplasmic; the sequence is MFRKLLKMWILLRPTHW. A helical; Signal-anchor for type II membrane protein transmembrane segment spans residues 18-38; sequence LILIALCAVTCAGYWLLWSEI. Residues 39–349 lie on the Lumenal side of the membrane; the sequence is RLEHAFKPLS…KFMYEKIRPK (311 aa). Residues Asn-107 and Asn-126 are each glycosylated (N-linked (GlcNAc...) asparagine). Residues His-139 and His-141 contribute to the active site. Disulfide bonds link Cys-200–Cys-208 and Cys-221–Cys-227. N-linked (GlcNAc...) asparagine glycosylation is present at Asn-282.

It belongs to the sulfotransferase 3 family. As to quaternary structure, homotrimer.

It localises to the golgi apparatus membrane. Its function is as follows. Catalyzes the transfer of sulfate to the C2-position of selected hexuronic acid residues within the maturing heparan sulfate (HS). The polypeptide is Heparin sulfate O-sulfotransferase (Drosophila melanogaster (Fruit fly)).